Reading from the N-terminus, the 310-residue chain is N-acetyl-gamma-glutamyl-phosphate reductase (310 aa).

C117 is a catalytic residue.

This sequence belongs to the NAGSA dehydrogenase family. Type 2 subfamily.

The protein resides in the cytoplasm. The catalysed reaction is N-acetyl-L-glutamate 5-semialdehyde + phosphate + NADP(+) = N-acetyl-L-glutamyl 5-phosphate + NADPH + H(+). It functions in the pathway amino-acid biosynthesis; L-arginine biosynthesis; N(2)-acetyl-L-ornithine from L-glutamate: step 3/4. Its function is as follows. Catalyzes the NADPH-dependent reduction of N-acetyl-5-glutamyl phosphate to yield N-acetyl-L-glutamate 5-semialdehyde. The chain is N-acetyl-gamma-glutamyl-phosphate reductase from Rhizobium etli (strain ATCC 51251 / DSM 11541 / JCM 21823 / NBRC 15573 / CFN 42).